A 326-amino-acid polypeptide reads, in one-letter code: ELAV-like protein 1 (326 aa).

Ser-2 carries the N-acetylserine modification. Phosphoserine is present on Ser-2. The 79-residue stretch at 20–98 (TNLIVNYLPQ…KTIKVSYARP (79 aa)) folds into the RRM 1 domain. 2 positions are modified to phosphoserine: Ser-100 and Ser-158. In terms of domain architecture, RRM 2 spans 106-186 (ANLYISGLPR…EPITVKFAAN (81 aa)). A Glycyl lysine isopeptide (Lys-Gly) (interchain with G-Cter in SUMO2) cross-link involves residue Lys-191. A phosphoserine mark is found at Ser-197 and Ser-202. Residue Arg-206 is modified to Omega-N-methylarginine. Position 217 is an asymmetric dimethylarginine; by CARM1; alternate (Arg-217). Arg-217 is subject to Omega-N-methylarginine; alternate. A phosphoserine mark is found at Ser-221 and Ser-318. The region spanning 244–322 (WCIFIYNLGQ…KILQVSFKTN (79 aa)) is the RRM 3 domain.

This sequence belongs to the RRM elav family. In terms of assembly, monomer and homodimer (in vitro). Interacts with ANP32A. Interacts with ZNF385A; the interaction is indirect and mRNA-dependent and may regulate p53/TP53 expression. Identified in a mRNP complex, at least composed of DHX9, DDX3X, ELAVL1, HNRNPU, IGF2BP1, ILF3, PABPC1, PCBP2, PTBP2, STAU1, STAU2, SYNCRIP and YBX1. Interacts with AGO1 and AGO2. Interacts with IGF2BP1; the interaction is enhanced by SEPIN14P20 peptide RBPR. Interacts with IGF2BP2 and IGF2BP3. Interacts with HNRNPL. Interacts with DHX36; this interaction occurs in a RNA-dependent manner. Interacts with ILF3; this interaction occurs in a RNA-dependent manner. Interacts with PLEKHN1. Interacts with SHFL; the interaction increases in presence of RNA. Interacts with YBX1; interaction recruits ELAVL1 on C5-methylcytosine (m5C)-containing mRNAs, thereby promoting mRNA stability. Interacts with FXR1. Post-translationally, phosphorylated by MAPKAPK2. Phosphorylated by PRKCD. Methylated at Arg-217 by CARM1 in macrophages in response to LPS challenge. As to expression, ubiquitous. Detected in brain, liver, thymus and muscle.

It is found in the cytoplasm. The protein resides in the nucleus. The protein localises to the stress granule. It localises to the P-body. RNA-binding protein that binds to the 3'-UTR region of mRNAs and increases their stability. Involved in embryonic stem cell (ESC) differentiation: preferentially binds mRNAs that are not methylated by N6-methyladenosine (m6A), stabilizing them, promoting ESC differentiation. Has also been shown to be capable of binding to m6A-containing mRNAs and contributes to MYC stability by binding to m6A-containing MYC mRNAs. Binds to poly-U elements and AU-rich elements (AREs) in the 3'-UTR of target mRNAs. Binds avidly to the AU-rich element in FOS and IL3/interleukin-3 mRNAs. In the case of the FOS AU-rich element, binds to a core element of 27 nucleotides that contain AUUUA, AUUUUA, and AUUUUUA motifs. Binds preferentially to the 5'-UUUU[AG]UUU-3' motif in vitro. With ZNF385A, binds the 3'-UTR of p53/TP53 mRNA to control their nuclear export induced by CDKN2A. Hence, may regulate p53/TP53 expression and mediate in part the CDKN2A anti-proliferative activity. May also bind with ZNF385A the CCNB1 mRNA. Increases the stability of the leptin mRNA harboring an AU-rich element (ARE) in its 3' UTR. The polypeptide is ELAV-like protein 1 (ELAVL1) (Homo sapiens (Human)).